Consider the following 314-residue polypeptide: L-lactate dehydrogenase 2 (314 aa).

Residues V16, D37, K42, Y68, and 82 to 83 each bind NAD(+); that span reads GV. Q85 and R91 together coordinate substrate. NAD(+) is bound by residues S104, 121 to 123, and T146; that span reads ASN. 123 to 126 is a substrate binding site; sequence NPVD. 151 to 154 is a substrate binding site; that stretch reads DTTR. The beta-D-fructose 1,6-bisphosphate site is built by R156 and H171. H178 (proton acceptor) is an active-site residue. Y223 carries the post-translational modification Phosphotyrosine. Substrate is bound at residue T232.

Belongs to the LDH/MDH superfamily. LDH family. As to quaternary structure, homotetramer.

The protein resides in the cytoplasm. The enzyme catalyses (S)-lactate + NAD(+) = pyruvate + NADH + H(+). It functions in the pathway fermentation; pyruvate fermentation to lactate; (S)-lactate from pyruvate: step 1/1. Allosterically activated by fructose 1,6-bisphosphate (FBP). Functionally, catalyzes the conversion of lactate to pyruvate. This is L-lactate dehydrogenase 2 from Lactococcus lactis subsp. lactis (strain IL1403) (Streptococcus lactis).